Reading from the N-terminus, the 148-residue chain is Glutamyl-tRNA(Gln) amidotransferase subunit C, mitochondrial (148 aa).

It belongs to the GatC family. Subunit of the heterotrimeric GatCAB amidotransferase (AdT) complex, composed of A, B and C subunits.

The protein resides in the mitochondrion. The catalysed reaction is L-glutamyl-tRNA(Gln) + L-glutamine + ATP + H2O = L-glutaminyl-tRNA(Gln) + L-glutamate + ADP + phosphate + H(+). Allows the formation of correctly charged Gln-tRNA(Gln) through the transamidation of misacylated Glu-tRNA(Gln) in the mitochondria. The reaction takes place in the presence of glutamine and ATP through an activated gamma-phospho-Glu-tRNA(Gln). In Drosophila sechellia (Fruit fly), this protein is Glutamyl-tRNA(Gln) amidotransferase subunit C, mitochondrial.